The following is a 1380-amino-acid chain: DNA-directed RNA polymerase subunit beta (1380 aa).

It belongs to the RNA polymerase beta chain family. As to quaternary structure, the RNAP catalytic core consists of 2 alpha, 1 beta, 1 beta' and 1 omega subunit. When a sigma factor is associated with the core the holoenzyme is formed, which can initiate transcription.

The enzyme catalyses RNA(n) + a ribonucleoside 5'-triphosphate = RNA(n+1) + diphosphate. Its function is as follows. DNA-dependent RNA polymerase catalyzes the transcription of DNA into RNA using the four ribonucleoside triphosphates as substrates. In Ehrlichia ruminantium (strain Welgevonden), this protein is DNA-directed RNA polymerase subunit beta.